We begin with the raw amino-acid sequence, 290 residues long: MYG1 protein CPn_0489/CP_0265/CPj0489/CpB0509 (290 aa).

Belongs to the MYG1 family.

This is MYG1 protein CPn_0489/CP_0265/CPj0489/CpB0509 from Chlamydia pneumoniae (Chlamydophila pneumoniae).